The following is a 197-amino-acid chain: Dephospho-CoA kinase (197 aa).

The DPCK domain occupies 2-197 (IIGLTGGIGS…HTKYMELLNE (196 aa)). 10-15 (GSGKSA) serves as a coordination point for ATP.

The protein belongs to the CoaE family.

The protein localises to the cytoplasm. It catalyses the reaction 3'-dephospho-CoA + ATP = ADP + CoA + H(+). It functions in the pathway cofactor biosynthesis; coenzyme A biosynthesis; CoA from (R)-pantothenate: step 5/5. Catalyzes the phosphorylation of the 3'-hydroxyl group of dephosphocoenzyme A to form coenzyme A. This is Dephospho-CoA kinase from Gamma-proteobacterium EBAC31A08.